The primary structure comprises 123 residues: uncharacterized protein (123 aa).

Residues 34 to 123 (PEKISQTVKK…MNRDGGVKKE (90 aa)) form a disordered region. 3 stretches are compositionally biased toward basic and acidic residues: residues 50–60 (KKIDENKDKSP), 74–100 (TAKD…EFSQ), and 107–123 (EETR…VKKE).

The protein localises to the mitochondrion. This is an uncharacterized protein from Schizosaccharomyces pombe (strain 972 / ATCC 24843) (Fission yeast).